A 637-amino-acid polypeptide reads, in one-letter code: Chaperone protein HtpG (637 aa).

An a; substrate-binding region spans residues 1-345 (MSQQETHGFQ…SNDLPLNVSR (345 aa)). Residues 346-562 (EILQDNHITK…EGEMSSQMIK (217 aa)) form a b region. The segment at 563–637 (LMQAAGQPVP…MNQMLLANLK (75 aa)) is c.

It belongs to the heat shock protein 90 family. As to quaternary structure, homodimer.

It localises to the cytoplasm. Molecular chaperone. Has ATPase activity. This Shewanella sp. (strain MR-7) protein is Chaperone protein HtpG.